The sequence spans 236 residues: tRNA1(Val) (adenine(37)-N6)-methyltransferase (236 aa).

The protein belongs to the methyltransferase superfamily. tRNA (adenine-N(6)-)-methyltransferase family.

The protein localises to the cytoplasm. It carries out the reaction adenosine(37) in tRNA1(Val) + S-adenosyl-L-methionine = N(6)-methyladenosine(37) in tRNA1(Val) + S-adenosyl-L-homocysteine + H(+). Functionally, specifically methylates the adenine in position 37 of tRNA(1)(Val) (anticodon cmo5UAC). The sequence is that of tRNA1(Val) (adenine(37)-N6)-methyltransferase from Actinobacillus pleuropneumoniae serotype 5b (strain L20).